We begin with the raw amino-acid sequence, 260 residues long: UPF0246 protein BURPS668_1321 (260 aa).

The protein belongs to the UPF0246 family.

This Burkholderia pseudomallei (strain 668) protein is UPF0246 protein BURPS668_1321.